A 404-amino-acid polypeptide reads, in one-letter code: Adenosylhomocysteinase (404 aa).

Substrate contacts are provided by Asp-114 and Glu-139. NAD(+) is bound at residue 140–142 (TTT). Substrate-binding residues include Lys-169 and Asp-173. NAD(+) contacts are provided by residues Asn-174, 203–208 (GYGWCG), Glu-226, Asn-261, 282–284 (AGH), and Asn-329.

It belongs to the adenosylhomocysteinase family. NAD(+) is required as a cofactor.

It is found in the cytoplasm. It carries out the reaction S-adenosyl-L-homocysteine + H2O = L-homocysteine + adenosine. The protein operates within amino-acid biosynthesis; L-homocysteine biosynthesis; L-homocysteine from S-adenosyl-L-homocysteine: step 1/1. Functionally, may play a key role in the regulation of the intracellular concentration of adenosylhomocysteine. This is Adenosylhomocysteinase from Thermotoga maritima (strain ATCC 43589 / DSM 3109 / JCM 10099 / NBRC 100826 / MSB8).